The chain runs to 362 residues: Cap-specific mRNA (nucleoside-2'-O-)-methyltransferase 1 (362 aa).

One can recognise a RrmJ-type SAM-dependent 2'-O-MTase domain in the interval 87 to 294; that stretch reads SFGNRAGHKL…ERYLVCLGFL (208 aa). S-adenosyl-L-methionine contacts are provided by Gly-130 and Asp-207. Lys-248 acts as the Proton acceptor in catalysis.

It is found in the nucleus. It catalyses the reaction a 5'-end (N(7)-methyl 5'-triphosphoguanosine)-ribonucleoside in mRNA + S-adenosyl-L-methionine = a 5'-end (N(7)-methyl 5'-triphosphoguanosine)-(2'-O-methyl-ribonucleoside) in mRNA + S-adenosyl-L-homocysteine + H(+). S-adenosyl-L-methionine-dependent methyltransferase that mediates RNA cap1 2'-O-ribose methylation to the 5'-cap structure of spliced leader and U1 small nuclear RNAs. Methylates the ribose of the first nucleotide of a m(7)GpppG-capped RNA to produce m(7)GpppNmp (cap1). Cap1 modification is linked to higher levels of translation. Recognizes a guanosine cap on RNA independent of its N(7) methylation status. This is Cap-specific mRNA (nucleoside-2'-O-)-methyltransferase 1 from Trypanosoma cruzi (strain CL Brener).